The sequence spans 969 residues: Isoleucine--tRNA ligase (969 aa).

The short motif at 68 to 78 (PYANGNLHMGH) is the 'HIGH' region element. Position 584 (Glu-584) interacts with L-isoleucyl-5'-AMP. Residues 625–629 (KMSKS) carry the 'KMSKS' region motif. Lys-628 is a binding site for ATP. 4 residues coordinate Zn(2+): Cys-938, Cys-941, Cys-958, and Cys-961.

It belongs to the class-I aminoacyl-tRNA synthetase family. IleS type 1 subfamily. As to quaternary structure, monomer. Zn(2+) serves as cofactor.

Its subcellular location is the cytoplasm. It carries out the reaction tRNA(Ile) + L-isoleucine + ATP = L-isoleucyl-tRNA(Ile) + AMP + diphosphate. Its function is as follows. Catalyzes the attachment of isoleucine to tRNA(Ile). As IleRS can inadvertently accommodate and process structurally similar amino acids such as valine, to avoid such errors it has two additional distinct tRNA(Ile)-dependent editing activities. One activity is designated as 'pretransfer' editing and involves the hydrolysis of activated Val-AMP. The other activity is designated 'posttransfer' editing and involves deacylation of mischarged Val-tRNA(Ile). This Prochlorococcus marinus (strain SARG / CCMP1375 / SS120) protein is Isoleucine--tRNA ligase.